Reading from the N-terminus, the 407-residue chain is Inhibin beta B chain (407 aa).

Positions 1 to 28 (MDGLPGRALGAACLLLLAAGWLGPEAWG) are cleaved as a signal peptide. The disordered stretch occupies residues 27-60 (WGSPTPPPSPAAPPPPPPPGALGGSQDTCTSCGG). The propeptide occupies 29–292 (SPTPPPSPAA…VDSRHRIRKR (264 aa)). Residues 30–46 (PTPPPSPAAPPPPPPPG) are compositionally biased toward pro residues. A glycan (N-linked (GlcNAc...) asparagine) is linked at N93. Disulfide bonds link C296–C304, C303–C372, C332–C404, and C336–C406.

It belongs to the TGF-beta family. Dimeric, linked by one or more disulfide bonds. Inhibin B is a dimer of alpha and beta-B. Activin B is a homodimer of beta-B. Activin AB is a dimer of beta-A and beta-B. Interacts with FST and FSTL3.

The protein resides in the secreted. In terms of biological role, inhibins and activins inhibit and activate, respectively, the secretion of follitropin by the pituitary gland. Inhibins/activins are involved in regulating a number of diverse functions such as hypothalamic and pituitary hormone secretion, gonadal hormone secretion, germ cell development and maturation, erythroid differentiation, insulin secretion, nerve cell survival, embryonic axial development or bone growth, depending on their subunit composition. Inhibins appear to oppose the functions of activins. Functionally, activin B is a dimer of alpha and beta-B that plays a role in several essential biological processes including embryonic development, stem cell maintenance and differentiation, haematopoiesis, cell proliferation and wound healing. Signals through type I receptor ACVR1C, abundantly expressed in pancreatic beta cells, and type II receptors like ACVR2A. Upon ligand binding, these receptors phosphorylate intracellular signaling mediators SMAD2 and SMAD3, which form a complex with SMAD4, translocate to the nucleus, and regulate gene expression. Plays a crucial role in the induction of hepcidin by inflammation through activation of ACVR1C and subsequent phosphorylation of SMAD1/5/8. Regulates adipocyte lipid metabolism by decreasing non-esterified fatty acids and glycerol release and increases intracellular triglyceride content. Stimulates wound healing by promoting cell migration and hair follicle regeneration through the JNK and ERK signaling pathways downstream of RHOA. Inhibin B is a dimer of alpha and beta-B that plays a crucial role in the regulation of the reproductive system by inhibiting the secretion of follicle-stimulating hormone (FSH) from the anterior pituitary gland. Thereby, maintains reproductive homeostasis in both males and females. Acts as a more potent suppressor of FSH release than inhibin A. Functions as competitive receptor antagonist binding activin type II receptors with high affinity in the presence of the TGF-beta type III coreceptor/TGFBR3L. This chain is Inhibin beta B chain (INHBB), found in Sus scrofa (Pig).